The chain runs to 685 residues: MSTFLLEIGLEEVPAHLVTSSENQLIERTRNFLAEHRLTVGAINPYSTPRRLAVELTDVAEKSESLSEEKRGPSIERAKDANGEWTKAAMGFARGQGATPDDFETRDGYVWLTKHTEGVPAKDILVKIGAEVVSEMKFSTYMKWANNAFLYVRPIRWLVALFDKEVVDFHVLDVQTGRVTRGHRFLSNEHVEISSADDYVSKLESASVVVNAEVRKNAIRSQLTAIAKQNNWSLELDTDAAQNLLEEVNNIVEWPTAFAGTFDKKYLEIPDEVLITSMREHQRFFFVTNHDGKLLPHFLSVRNGNKEHLDNVIAGNEKVLVARLEDAEFFYKEDQTKTIADYMEKVKKLVFHEKIGTVYEHMQRTGVLAQALAQSLNFDEQQLSNVSRAAEIYKFDLMTGMVGEFDELQGIMGEHYAKLFGENPAVAAAIKEHYMPTSATGKIAESDIGAVLAVADKLDAIVTFFAADLTPSGSNDPYGLRRAATGIVRTLQEKNWHIALKPVLTQFAQSQGEVAAADITAVLEFILDRVRKLTLDDGVRQDLVSAGVSRSGNTDVVYLIDRINVLAAHSKDNDFRDVIESLTRVDRLAVKQLTNDSVDPSLFENDAEKELYQATYALNLSHLVKEGADEVYTTLAGLQSPISTYFEATMVNTENAAVKNNRYAQLNVIHRLISELGDLEQIVIK.

It belongs to the class-II aminoacyl-tRNA synthetase family. As to quaternary structure, tetramer of two alpha and two beta subunits.

Its subcellular location is the cytoplasm. The enzyme catalyses tRNA(Gly) + glycine + ATP = glycyl-tRNA(Gly) + AMP + diphosphate. This chain is Glycine--tRNA ligase beta subunit, found in Leuconostoc mesenteroides subsp. mesenteroides (strain ATCC 8293 / DSM 20343 / BCRC 11652 / CCM 1803 / JCM 6124 / NCDO 523 / NBRC 100496 / NCIMB 8023 / NCTC 12954 / NRRL B-1118 / 37Y).